A 355-amino-acid polypeptide reads, in one-letter code: MATTGLFEMNDKGKADKQKALECALAQIERQFGKGSIMKLGGDTPPPEIEATSTGSLGLDIALGIGGLPKGRIVEIYGPESSGKTTLTLHCIAEEQKKGGVCAFVDAEHALDPYYAKKLGVSLEDLLISQPDTGEQALEIVDTLVRSGAVSLVVVDSVAALTPKAEIEGDMGDATVGAQARLMSQAMRKLTASIGRSNCMVIFINQIRMKIGVMFGSPETTSGGNALKFYASVRLDIRRTGAIKDRDEVIGNQTRVKVVKNKVAPPFREVEFDILYGEGISKVGELVDLGVKAGVVAKSGAWYSYGDERIGQGRENAKQFLRDNPDIAYEIEDKIRASHGLEFGVDPTAEDLTEE.

78–85 (GPESSGKT) serves as a coordination point for ATP.

Belongs to the RecA family.

The protein localises to the cytoplasm. Can catalyze the hydrolysis of ATP in the presence of single-stranded DNA, the ATP-dependent uptake of single-stranded DNA by duplex DNA, and the ATP-dependent hybridization of homologous single-stranded DNAs. It interacts with LexA causing its activation and leading to its autocatalytic cleavage. In Rhodobacter capsulatus (Rhodopseudomonas capsulata), this protein is Protein RecA.